We begin with the raw amino-acid sequence, 446 residues long: Phosphoglucosamine mutase (446 aa).

Ser103 serves as the catalytic Phosphoserine intermediate. Residues Ser103, Asp242, Asp244, and Asp246 each coordinate Mg(2+). The residue at position 103 (Ser103) is a Phosphoserine.

It belongs to the phosphohexose mutase family. The cofactor is Mg(2+). Activated by phosphorylation.

The catalysed reaction is alpha-D-glucosamine 1-phosphate = D-glucosamine 6-phosphate. In terms of biological role, catalyzes the conversion of glucosamine-6-phosphate to glucosamine-1-phosphate. This Corynebacterium urealyticum (strain ATCC 43042 / DSM 7109) protein is Phosphoglucosamine mutase.